A 240-amino-acid chain; its full sequence is Ribonuclease HII (240 aa).

The region spanning 31–222 is the RNase H type-2 domain; the sequence is RLIAGVDEAG…VRRALGLETA (192 aa). A divalent metal cation-binding residues include D37, E38, and D130.

Belongs to the RNase HII family. Mn(2+) serves as cofactor. Requires Mg(2+) as cofactor.

It is found in the cytoplasm. It catalyses the reaction Endonucleolytic cleavage to 5'-phosphomonoester.. Its function is as follows. Endonuclease that specifically degrades the RNA of RNA-DNA hybrids. The polypeptide is Ribonuclease HII (Xanthomonas campestris pv. campestris (strain 8004)).